The chain runs to 603 residues: Flavin-dependent halogenase chlA (603 aa).

Gly-16, Ala-19, and Glu-59 together coordinate FAD. Chloride contacts are provided by Thr-352 and Gly-353.

Belongs to the flavin-dependent halogenase family.

It carries out the reaction 2,4,6-trihydroxyphenylhexan-1-one + FADH2 + chloride + O2 = (3-chloro-2,4,6-trihydroxyphenyl)hexan-1-one + FAD + 2 H2O + H(+). It catalyses the reaction (3-chloro-2,4,6-trihydroxyphenyl)hexan-1-one + FADH2 + chloride + O2 = (3,5-dichloro-2,4,6-trihydroxyphenyl)hexan-1-one + FAD + 2 H2O. Its function is as follows. Flavin-dependent halogenase; part of the gene cluster that mediates the biosynthesis of DIF-1 (Differentiation Inducing Factor-1), a signal molecule involved in the differentiation of pstO (prestalk-O) cells. The three-step process begins with the formation of (2,4,6-trihydroxyphenyl)-1-hexan-1-one (THPH) by the polyketide synthase StlB. THPH is then dichlorinated by the flavin-dependent halogenase ChlA. The last step of DIF-1 biosynthesis is the O-methylation of dichloro-THPH (or des-methyl-DIF-1) by the methyltransferase DmtA to yield DIF-1. The chain is Flavin-dependent halogenase chlA from Dictyostelium discoideum (Social amoeba).